The primary structure comprises 274 residues: Glutamate--cysteine ligase regulatory subunit (274 aa).

Ser-59 bears the Phosphoserine mark. Residue Lys-263 is modified to N6-acetyllysine.

It belongs to the aldo/keto reductase family. Glutamate--cysteine ligase light chain subfamily. In terms of assembly, heterodimer of a catalytic heavy chain and a regulatory light chain.

Its pathway is sulfur metabolism; glutathione biosynthesis; glutathione from L-cysteine and L-glutamate: step 1/2. In Mus musculus (Mouse), this protein is Glutamate--cysteine ligase regulatory subunit (Gclm).